The primary structure comprises 274 residues: Uridine-5'-phosphate dioxygenase (274 aa).

Positions 103, 105, and 246 each coordinate Fe cation.

Fe(2+) serves as cofactor.

It catalyses the reaction UMP + 2-oxoglutarate + O2 = uridine-5'-aldehyde + succinate + phosphate + CO2. Its pathway is antibiotic biosynthesis. Its activity is regulated as follows. Inhibited by several divalent cations, including Zn(2+). Functionally, dioxygenase involved in the biosynthesis of the lipopeptidyl nucleoside antibiotic A-90289. Catalyzes the dephosphorylation and oxidation of UMP to generate uridine-5'-aldehyde, the first intermediate in the biosynthesis of A-90289. This chain is Uridine-5'-phosphate dioxygenase, found in Streptomyces sp.